We begin with the raw amino-acid sequence, 513 residues long: Calcium-binding mitochondrial carrier protein SCaMC-2 (513 aa).

At 1-233 the chain is on the mitochondrial intermembrane side; sequence MARPRSLVSP…EKQTGMWWRH (233 aa). 4 EF-hand domains span residues 55 to 90, 91 to 124, 122 to 157, and 158 to 193; these read EHETRLQILFQELDVNKDGGICINDLAVGLKRLGVH, RTELELRKIVKAGDKDQDGQLDFEEFVHYLRDHE, DHEKKLRLVFKSLDKKNDGRIDAQEIMQSLRDLGVN, and ISEQQAEKILKSMDKNGTMTIDWNEWRDYHLLHPAE. Residues aspartate 68, asparagine 70, aspartate 72, aspartate 79, aspartate 104, aspartate 106, aspartate 108, glutamine 110, and glutamate 115 each contribute to the Ca(2+) site. Solcar repeat units lie at residues 228–314, 322–407, and 419–507; these read GMWW…MKRI, LGIH…LKNA, and PGVF…LKLT. The helical transmembrane segment at 234-251 threads the bilayer; sequence LVAGGGAGAVSRTCTAPL. Topologically, residues 252-288 are mitochondrial matrix; it reads DRLKVLMQVHASRSNNMSMLGGFTQMIREGGIRSLWR. A helical membrane pass occupies residues 289–308; the sequence is GNGINVIKIAPESAIKFMAY. Over 309-331 the chain is Mitochondrial intermembrane; the sequence is EQMKRIIGSDQETLGIHERLVAG. A helical membrane pass occupies residues 332–345; the sequence is SLAGVIAQSSIYPM. At 346 to 381 the chain is on the mitochondrial matrix side; it reads EVLKTRMALRKTGQYQGMLDCGKKILLKEGVSAFYK. The helical transmembrane segment at 382–401 threads the bilayer; the sequence is GYVPNMLGIIPYAGIDLAVY. Over 402–424 the chain is Mitochondrial intermembrane; it reads ETLKNAWLQRYATSSADPGVFVL. A helical membrane pass occupies residues 425-442; sequence LACGTISSTCGQLASYPL. Topologically, residues 443–481 are mitochondrial matrix; the sequence is ALVRTRMQAEASVEGAPQMTMSKLFKHIVKTEGAFGLYR. Residues 482–501 traverse the membrane as a helical segment; the sequence is GLAPNFMKVIPAVSISYVVY. Residues 502–513 lie on the Mitochondrial intermembrane side of the membrane; sequence ENLKLTLGVQSR.

The protein belongs to the mitochondrial carrier (TC 2.A.29) family.

It is found in the mitochondrion inner membrane. Calcium-dependent mitochondrial solute carrier. The chain is Calcium-binding mitochondrial carrier protein SCaMC-2 (slc25a25) from Xenopus tropicalis (Western clawed frog).